A 361-amino-acid polypeptide reads, in one-letter code: P2Y purinoceptor 4 (361 aa).

Residues M1 to D20 form a disordered region. The Extracellular portion of the chain corresponds to M1 to K30. A helical transmembrane segment spans residues F31–F58. The Cytoplasmic segment spans residues R59–T68. The chain crosses the membrane as a helical span at residues Y69 to Y91. Topologically, residues A92–R108 are extracellular. Residues C104 and C181 are joined by a disulfide bond. The helical transmembrane segment at F109–V127 threads the bilayer. At H128–S149 the chain is on the cytoplasmic side. Residues L150 to V170 traverse the membrane as a helical segment. Over T171–H192 the chain is Extracellular. N175 carries an N-linked (GlcNAc...) asparagine glycan. A helical transmembrane segment spans residues Y193–L218. Residues M219–T242 lie on the Cytoplasmic side of the membrane. A helical membrane pass occupies residues I243–Y265. Over Q266–V283 the chain is Extracellular. A helical transmembrane segment spans residues Y284–T305. At G306 to L361 the chain is on the cytoplasmic side.

The protein belongs to the G-protein coupled receptor 1 family. In terms of processing, phosphorylation of Ser-329 and Ser-330 is a key step in agonist-dependent desensitization and loss of surface P2RY4. This phosphorylation does not involve PKC, nor other calcium-activated kinases. Widely expressed at low levels. In brain, higher expression in the pineal gland and ventricular system.

It localises to the cell membrane. In terms of biological role, receptor for ATP and UTP coupled to G-proteins that activate a phosphatidylinositol-calcium second messenger system. Not activated by ADP or UDP. This chain is P2Y purinoceptor 4 (P2ry4), found in Rattus norvegicus (Rat).